The following is a 785-amino-acid chain: B-cell scaffold protein with ankyrin repeats (785 aa).

Positions 1–154 are interaction with ITPR2; that stretch reads MLPAAPGKGL…DYISVIQSII (154 aa). The TIR domain occupies 25 to 153; the sequence is NTKDIIMIYE…EDYISVIQSI (129 aa). In terms of domain architecture, DBB spans 200–327; that stretch reads VLPTEIPCEN…EIPYYEFQSL (128 aa). 2 ANK repeats span residues 342–371 and 378–408; these read ELPTLLHCAAKFGLKNLAIHLLQCSGATWA and EGSDPAHIAERHGHKELKKIFEDFSIQEIDI. 4 disordered regions span residues 433–480, 493–514, 538–578, and 606–625; these read PAFH…SESS, GADPENNSQEPLMSSRPPLPPP, QMER…EDPY, and FIINRPPAPTPRPTSIPPKE. The span at 553 to 568 shows a compositional bias: basic and acidic residues; that stretch reads ETGDEPKGEKEKKEEE. Over residues 569 to 578 the composition is skewed to acidic residues; the sequence is KEQEEEEDPY. Pro residues predominate over residues 611 to 621; that stretch reads PPAPTPRPTSI.

As to quaternary structure, interacts with LYN, ITPR1 and ITPR2. Phosphorylated on tyrosines upon BCR activation. In terms of tissue distribution, expressed in B-cell but not T-cell or myeloid cell lines. Highest expression in CD19(+) B-cells, with very low expression in other cell populations.

In terms of biological role, involved in B-cell receptor (BCR)-induced Ca(2+) mobilization from intracellular stores. Promotes Lyn-mediated phosphorylation of IP3 receptors 1 and 2. The polypeptide is B-cell scaffold protein with ankyrin repeats (BANK1) (Homo sapiens (Human)).